Here is a 196-residue protein sequence, read N- to C-terminus: Imidazole glycerol phosphate synthase subunit HisH (196 aa).

The 195-residue stretch at 2–196 (KVVILDTGCA…AQLLKNFLEM (195 aa)) folds into the Glutamine amidotransferase type-1 domain. The Nucleophile role is filled by C77. Catalysis depends on residues H178 and E180.

Heterodimer of HisH and HisF.

The protein resides in the cytoplasm. It carries out the reaction 5-[(5-phospho-1-deoxy-D-ribulos-1-ylimino)methylamino]-1-(5-phospho-beta-D-ribosyl)imidazole-4-carboxamide + L-glutamine = D-erythro-1-(imidazol-4-yl)glycerol 3-phosphate + 5-amino-1-(5-phospho-beta-D-ribosyl)imidazole-4-carboxamide + L-glutamate + H(+). The enzyme catalyses L-glutamine + H2O = L-glutamate + NH4(+). The protein operates within amino-acid biosynthesis; L-histidine biosynthesis; L-histidine from 5-phospho-alpha-D-ribose 1-diphosphate: step 5/9. Its function is as follows. IGPS catalyzes the conversion of PRFAR and glutamine to IGP, AICAR and glutamate. The HisH subunit catalyzes the hydrolysis of glutamine to glutamate and ammonia as part of the synthesis of IGP and AICAR. The resulting ammonia molecule is channeled to the active site of HisF. The chain is Imidazole glycerol phosphate synthase subunit HisH from Pectobacterium atrosepticum (strain SCRI 1043 / ATCC BAA-672) (Erwinia carotovora subsp. atroseptica).